Here is a 204-residue protein sequence, read N- to C-terminus: Holliday junction branch migration complex subunit RuvA (204 aa).

The interval 1–64 is domain I; sequence MIGRLQGILL…EDAHLLFGFA (64 aa). The interval 65–143 is domain II; the sequence is QKTDRTLFRE…GVKQSDFFVE (79 aa). The tract at residues 144–155 is flexible linker; sequence STHIPLSPSIES. The segment at 156 to 204 is domain III; it reads HSESSSDEAISALIALGYKPVEAEKMVKRVAKPELTSEQVIREALKVAL.

It belongs to the RuvA family. Homotetramer. Forms an RuvA(8)-RuvB(12)-Holliday junction (HJ) complex. HJ DNA is sandwiched between 2 RuvA tetramers; dsDNA enters through RuvA and exits via RuvB. An RuvB hexamer assembles on each DNA strand where it exits the tetramer. Each RuvB hexamer is contacted by two RuvA subunits (via domain III) on 2 adjacent RuvB subunits; this complex drives branch migration. In the full resolvosome a probable DNA-RuvA(4)-RuvB(12)-RuvC(2) complex forms which resolves the HJ.

The protein localises to the cytoplasm. Its function is as follows. The RuvA-RuvB-RuvC complex processes Holliday junction (HJ) DNA during genetic recombination and DNA repair, while the RuvA-RuvB complex plays an important role in the rescue of blocked DNA replication forks via replication fork reversal (RFR). RuvA specifically binds to HJ cruciform DNA, conferring on it an open structure. The RuvB hexamer acts as an ATP-dependent pump, pulling dsDNA into and through the RuvAB complex. HJ branch migration allows RuvC to scan DNA until it finds its consensus sequence, where it cleaves and resolves the cruciform DNA. The polypeptide is Holliday junction branch migration complex subunit RuvA (Haemophilus influenzae (strain ATCC 51907 / DSM 11121 / KW20 / Rd)).